The primary structure comprises 39 residues: Potassium channel toxin alpha-KTx 2.16 (39 aa).

3 disulfide bridges follow: cysteine 7–cysteine 29, cysteine 13–cysteine 34, and cysteine 17–cysteine 36. The residue at position 39 (isoleucine 39) is an Isoleucine amide.

Belongs to the short scorpion toxin superfamily. Potassium channel inhibitor family. Alpha-KTx 02 subfamily. In terms of tissue distribution, expressed by the venom gland.

The protein localises to the secreted. Functionally, blocks human voltage-gated potassium channels Kv1.2/KCNA2 (IC(50)=0.7 nM), Kv1.3/KCNA3 (IC(50)=26.2 nM) and blocks intermediate conductance calcium-activated potassium channel KCa3.1/KCNN4 (IC(50)=56 nM). The sequence is that of Potassium channel toxin alpha-KTx 2.16 from Centruroides tecomanus (Scorpion).